We begin with the raw amino-acid sequence, 418 residues long: Glutamyl-tRNA reductase (418 aa).

Substrate is bound by residues 49-52 (TCNR), serine 109, 114-116 (EPQ), and glutamine 120. The active-site Nucleophile is cysteine 50. 189–194 (GAGETI) is an NADP(+) binding site.

This sequence belongs to the glutamyl-tRNA reductase family. In terms of assembly, homodimer.

It catalyses the reaction (S)-4-amino-5-oxopentanoate + tRNA(Glu) + NADP(+) = L-glutamyl-tRNA(Glu) + NADPH + H(+). Its pathway is porphyrin-containing compound metabolism; protoporphyrin-IX biosynthesis; 5-aminolevulinate from L-glutamyl-tRNA(Glu): step 1/2. Functionally, catalyzes the NADPH-dependent reduction of glutamyl-tRNA(Glu) to glutamate 1-semialdehyde (GSA). This Escherichia fergusonii (strain ATCC 35469 / DSM 13698 / CCUG 18766 / IAM 14443 / JCM 21226 / LMG 7866 / NBRC 102419 / NCTC 12128 / CDC 0568-73) protein is Glutamyl-tRNA reductase.